We begin with the raw amino-acid sequence, 396 residues long: MSGSSLRRVAVFGATGSIGASALDVIARHPERLRASVLSAGSKVDALLALCVQHRPAHAVIADAALYPTLRDGLHDAGLTTQAHAGDQALDALAASDACDTVVAAIVGAAGLSSTLAAAAAGKRLLLANKESLVLAGELLTRTAAAAGAEIIPIDSEHSAIFQCLRSCDASRGVRRVILTASGGPFRGRQRAQLAEVTPAQAVAHPKWSMGPKISVDSATLMNKGLEVIEAHHLFGLPGEQIDVLVHPQSLVHSLVEFVDGSTLAQLGLPDMRTTLAVGLAWPERVESGVGGLDLLQQGRLDFEAPDTGAFPCLRLAWDALRAGGTAPAILNAANEVAVSAFLQGKVGFLAIPALVEHTLTTLQRQNADTLNTLLFADAEARRTTERALAHHSLHA.

Residues threonine 15, glycine 16, serine 17, isoleucine 18, glycine 41, and asparagine 129 each contribute to the NADPH site. Lysine 130 provides a ligand contact to 1-deoxy-D-xylulose 5-phosphate. Residue glutamate 131 participates in NADPH binding. Residue aspartate 155 coordinates Mn(2+). Serine 156, glutamate 157, serine 182, and histidine 205 together coordinate 1-deoxy-D-xylulose 5-phosphate. Glutamate 157 contributes to the Mn(2+) binding site. Glycine 211 contributes to the NADPH binding site. 1-deoxy-D-xylulose 5-phosphate is bound by residues serine 218, asparagine 223, lysine 224, and glutamate 227. Glutamate 227 lines the Mn(2+) pocket.

The protein belongs to the DXR family. Mg(2+) serves as cofactor. Requires Mn(2+) as cofactor.

The catalysed reaction is 2-C-methyl-D-erythritol 4-phosphate + NADP(+) = 1-deoxy-D-xylulose 5-phosphate + NADPH + H(+). Its pathway is isoprenoid biosynthesis; isopentenyl diphosphate biosynthesis via DXP pathway; isopentenyl diphosphate from 1-deoxy-D-xylulose 5-phosphate: step 1/6. Functionally, catalyzes the NADPH-dependent rearrangement and reduction of 1-deoxy-D-xylulose-5-phosphate (DXP) to 2-C-methyl-D-erythritol 4-phosphate (MEP). This Xanthomonas campestris pv. campestris (strain B100) protein is 1-deoxy-D-xylulose 5-phosphate reductoisomerase.